Here is a 155-residue protein sequence, read N- to C-terminus: MYKMQLLSCIALMLVLVANSAPITSSSTKETEQQMEQLLLDLQLLLNGVNNYENPQLSRMLTFKFYTPKKATEFTHLQCLAEELKNLEEVLGLPQSKNVHLTDTKELISNMNVTLLKLKGSETSYNCEYDDETATITEFLNKWITFCQSIFSTLT.

Residues 1-20 (MYKMQLLSCIALMLVLVANS) form the signal peptide. Thr-24 carries an O-linked (GalNAc...) threonine glycan. A disulfide bridge connects residues Cys-79 and Cys-127. Asn-112 is a glycosylation site (N-linked (GlcNAc...) asparagine).

The protein belongs to the IL-2 family.

The protein resides in the secreted. Functionally, cytokine produced by activated CD4-positive helper T-cells and to a lesser extend activated CD8-positive T-cells and natural killer (NK) cells that plays pivotal roles in the immune response and tolerance. Binds to a receptor complex composed of either the high-affinity trimeric IL-2R (IL2RA/CD25, IL2RB/CD122 and IL2RG/CD132) or the low-affinity dimeric IL-2R (IL2RB and IL2RG). Interaction with the receptor leads to oligomerization and conformation changes in the IL-2R subunits resulting in downstream signaling starting with phosphorylation of JAK1 and JAK3. In turn, JAK1 and JAK3 phosphorylate the receptor to form a docking site leading to the phosphorylation of several substrates including STAT5. This process leads to activation of several pathways including STAT, phosphoinositide-3-kinase/PI3K and mitogen-activated protein kinase/MAPK pathways. Functions as a T-cell growth factor and can increase NK-cell cytolytic activity as well. Promotes strong proliferation of activated B-cells and subsequently immunoglobulin production. Plays a pivotal role in regulating the adaptive immune system by controlling the survival and proliferation of regulatory T-cells, which are required for the maintenance of immune tolerance. Moreover, participates in the differentiation and homeostasis of effector T-cell subsets, including Th1, Th2, Th17 as well as memory CD8-positive T-cells. This is Interleukin-2 (IL2) from Vulpes vulpes (Red fox).